Here is a 148-residue protein sequence, read N- to C-terminus: Large ribosomal subunit protein uL15 (148 aa).

A disordered region spans residues 1-51; the sequence is MNLSSLKPAEGAVKSRKRIGRGPGSGLGGTSTRGHKGAKSRSGYSKKIGFE. Positions 21–31 are enriched in gly residues; it reads RGPGSGLGGTS.

The protein belongs to the universal ribosomal protein uL15 family. In terms of assembly, part of the 50S ribosomal subunit.

In terms of biological role, binds to the 23S rRNA. The protein is Large ribosomal subunit protein uL15 of Porphyromonas gingivalis (strain ATCC 33277 / DSM 20709 / CIP 103683 / JCM 12257 / NCTC 11834 / 2561).